The chain runs to 400 residues: Phosphoglycerate kinase (400 aa).

Substrate-binding positions include 23-25, Arg38, 61-64, Arg120, and Arg153; these read DLN and HFGR. Residues Lys203, Glu325, and 355-358 contribute to the ATP site; that span reads GGDT.

This sequence belongs to the phosphoglycerate kinase family. As to quaternary structure, monomer.

Its subcellular location is the cytoplasm. It catalyses the reaction (2R)-3-phosphoglycerate + ATP = (2R)-3-phospho-glyceroyl phosphate + ADP. Its pathway is carbohydrate degradation; glycolysis; pyruvate from D-glyceraldehyde 3-phosphate: step 2/5. The sequence is that of Phosphoglycerate kinase from Methylorubrum extorquens (strain PA1) (Methylobacterium extorquens).